The following is a 400-amino-acid chain: 2'-5'-oligoadenylate synthase 1 (400 aa).

Residues 13-60 are interaction with dsRNA; the sequence is DKFIEDYLLPDTCFRMQINHAIDIICGFLKERCFRGSSYPVCVSKVVK. Residue Ser63 participates in ATP binding. Positions 75, 77, and 148 each coordinate Mg(2+). Positions 200 to 210 are interaction with dsRNA; it reads QRPTKLKSLIR. Arg210, Lys213, and Gln229 together coordinate ATP. Cys397 carries the S-geranylgeranyl cysteine lipid modification.

The protein belongs to the 2-5A synthase family. Monomer. Homotetramer. Mg(2+) is required as a cofactor. In terms of processing, prenylated at C-terminal. C-terminal prenylation is necessary to initiate a block to SARS-CoV-2 and is associated with protection from severe COVID-1. The prenylated form is targeted to perinuclear structures rich in viral dsRNA, whereas the non-prenylated form is diffusely localized and unable to initiate a detectable block to SARS-CoV-2 replication. C-terminal prenylation is also necessary to initiate a block to cardiovirus EMCV. Post-translationally, not prenylated at C-terminal. The non-prenylated form is diffusely localized and unable to initiate a detectable block to SARS-CoV-2 replication. As to expression, expressed in lungs.

It localises to the cytoplasm. The protein localises to the mitochondrion. It is found in the nucleus. The protein resides in the microsome. Its subcellular location is the endoplasmic reticulum. It localises to the secreted. It carries out the reaction 3 ATP = 5'-triphosphoadenylyl-(2'-&gt;5')-adenylyl-(2'-&gt;5')-adenosine + 2 diphosphate. With respect to regulation, produced as a latent enzyme which is activated by dsRNA generated during the course of viral infection. The dsRNA activator must be at least 15 nucleotides long, and no modification of the 2'-hydroxyl group is tolerated. ssRNA or dsDNA do not act as activators. Its function is as follows. Interferon-induced, dsRNA-activated antiviral enzyme which plays a critical role in cellular innate antiviral response. In addition, it may also play a role in other cellular processes such as apoptosis, cell growth, differentiation and gene regulation. Synthesizes higher oligomers of 2'-5'-oligoadenylates (2-5A) from ATP which then bind to the inactive monomeric form of ribonuclease L (RNase L) leading to its dimerization and subsequent activation. Activation of RNase L leads to degradation of cellular as well as viral RNA, resulting in the inhibition of protein synthesis, thus terminating viral replication. Can mediate the antiviral effect via the classical RNase L-dependent pathway or an alternative antiviral pathway independent of RNase L. The secreted form displays antiviral effect against vesicular stomatitis virus (VSV), herpes simplex virus type 2 (HSV-2), and encephalomyocarditis virus (EMCV) and stimulates the alternative antiviral pathway independent of RNase L. Functionally, when prenylated at C-terminal, acts as a double-stranded RNA (dsRNA) sensor specifically targeted to membranous replicative organelles in SARS coronavirus-2/SARS-CoV-2 infected cells where it binds to dsRNA structures in the SARS-CoV-2 5'-UTR and initiates a potent block to SARS-CoV-2 replication. Recognizes short stretches of dsRNA and activates RNase L. The binding is remarkably specific, with two conserved stem loops in the SARS-CoV-2 5'- untranslated region (UTR) constituting the principal viral target. The same mechanism is necessary to initiate a block to cardiovirus EMCV. In terms of biological role, not prenylated at C-terminal, is diffusely localized and unable to initiate a detectable block to SARS-CoV-2 replication. The sequence is that of 2'-5'-oligoadenylate synthase 1 (OAS1) from Homo sapiens (Human).